The chain runs to 115 residues: uncharacterized protein (115 aa).

Residues 1-11 (MKLTKEKKNDC) lie on the Cytoplasmic side of the membrane. A helical membrane pass occupies residues 12-32 (LVGVSYIPPLNFFTLTFLFLL). Topologically, residues 33–52 (RIEKVHLSLSLSLSLSLRFY) are extracellular. Residues 53 to 73 (YFHNVCYPSLFLFFCFVIPFF) form a helical membrane-spanning segment. Topologically, residues 74–78 (YSVRF) are cytoplasmic. The helical transmembrane segment at 79-98 (ILLYLHILRSFYELNILLLY) threads the bilayer. Residues 99 to 115 (GAENSRRQSPPGYYVIR) lie on the Extracellular side of the membrane.

The protein localises to the membrane. This is an uncharacterized protein from Saccharomyces cerevisiae (strain ATCC 204508 / S288c) (Baker's yeast).